The primary structure comprises 237 residues: Concanavalin V (237 aa).

The Mn(2+) site is built by glutamate 8 and aspartate 10. Ca(2+) is bound by residues aspartate 10, tyrosine 12, asparagine 14, and aspartate 19. Residue asparagine 14 coordinates a carbohydrate. Aspartate 19 and histidine 24 together coordinate Mn(2+). Residues glycine 70, 98–100, aspartate 208, and arginine 228 contribute to the a carbohydrate site; that span reads GLY.

This sequence belongs to the leguminous lectin family. In terms of assembly, homotetramer. Post-translationally, concanavalin A-like lectins of the Diocleinae subtribe undergo proteolytic processing referred to as circular permutation. The propeptide is split into an N-terminal and a C-terminal part, the gamma and beta chain, respectively. These are then religated in beta-gamma order to form the mature alpha chain. The beta and gamma chains can often be detected in cell extracts. Residues 1-118 of the mature chain, as displayed here, probably constitute the beta chain in the propeptide, residues 119-237 the gamma chain.

D-mannose/D-glucose-binding lectin which binds alpha-methyl-D-mannoside, D-mannose and D-glucose in that order. Also binds to serum fetuin and ovalbumin. Has hemagglutinating activity towards rabbit erythrocytes. Is not toxic towards larvae of the brine shrimp Artemia. Induces relaxation in rat endothelized aorta. Shows a transient edematogenic effect in rat. This chain is Concanavalin V, found in Canavalia cathartica (Jackbean).